We begin with the raw amino-acid sequence, 143 residues long: Sirohydrochlorin cobaltochelatase (143 aa).

His9 (proton acceptor) is an active-site residue. His9 contributes to the Co(2+) binding site. His9 serves as a coordination point for Ni(2+). Residues Glu45 and 70–75 contribute to the substrate site; that span reads LAHGVH. Residue His75 coordinates Co(2+). His75 serves as a coordination point for Ni(2+).

It belongs to the CbiX family. CbiXS subfamily. As to quaternary structure, homotetramer; dimer of dimers.

It catalyses the reaction Co-sirohydrochlorin + 2 H(+) = sirohydrochlorin + Co(2+). The enzyme catalyses Ni-sirohydrochlorin + 2 H(+) = sirohydrochlorin + Ni(2+). It participates in cofactor biosynthesis; adenosylcobalamin biosynthesis; cob(II)yrinate a,c-diamide from sirohydrochlorin (anaerobic route): step 1/10. In terms of biological role, catalyzes the insertion of Co(2+) into sirohydrochlorin as part of the anaerobic pathway to cobalamin biosynthesis. Involved in the biosynthesis of the unique nickel-containing tetrapyrrole coenzyme F430, the prosthetic group of methyl-coenzyme M reductase (MCR), which plays a key role in methanogenesis and anaerobic methane oxidation. Catalyzes the insertion of Ni(2+) into sirohydrochlorin to yield Ni-sirohydrochlorin. In Methanopyrus kandleri (strain AV19 / DSM 6324 / JCM 9639 / NBRC 100938), this protein is Sirohydrochlorin cobaltochelatase.